We begin with the raw amino-acid sequence, 450 residues long: L-galactonate dehydratase (450 aa).

The active site involves K221. The Mg(2+) site is built by D251, E277, and E306. H356 is an active-site residue.

Belongs to the mandelate racemase/muconate lactonizing enzyme family. Mg(2+) serves as cofactor.

The catalysed reaction is L-galactonate = 2-dehydro-3-deoxy-L-galactonate + H2O. Its pathway is carbohydrate acid metabolism. In terms of biological role, mediates the conversion of L-galactonate to 2-dehydro-3-deoxy-L-galactonate, the second step in D-galacturonate catabolic process. This Hypocrea jecorina (Trichoderma reesei) protein is L-galactonate dehydratase (lgd1).